Consider the following 363-residue polypeptide: Probable aminomethyltransferase (363 aa).

It belongs to the GcvT family. In terms of assembly, the glycine cleavage system is composed of four proteins: P, T, L and H.

The enzyme catalyses N(6)-[(R)-S(8)-aminomethyldihydrolipoyl]-L-lysyl-[protein] + (6S)-5,6,7,8-tetrahydrofolate = N(6)-[(R)-dihydrolipoyl]-L-lysyl-[protein] + (6R)-5,10-methylene-5,6,7,8-tetrahydrofolate + NH4(+). Its function is as follows. The glycine cleavage system catalyzes the degradation of glycine. The sequence is that of Probable aminomethyltransferase from Haloarcula marismortui (strain ATCC 43049 / DSM 3752 / JCM 8966 / VKM B-1809) (Halobacterium marismortui).